The following is a 363-amino-acid chain: Type-2 angiotensin II receptor (363 aa).

The Extracellular segment spans residues 1-45 (MKDNFSFAATSRNITSSRPFDNLNATGTNESAFNCSHKPSDKHLE). 5 N-linked (GlcNAc...) asparagine glycosylation sites follow: N4, N13, N24, N29, and N34. Cystine bridges form between C35/C290 and C117/C195. A helical transmembrane segment spans residues 46–70 (AIPVLYYMIFVIGFAVNIVVVSLFC). Residues 71-80 (CQKGPKKVSS) are Cytoplasmic-facing. The helical transmembrane segment at 81–104 (IYIFNLALADLLLLATLPLWATYY) threads the bilayer. The angiotensin II site is built by Y103 and Y104. Residues 105–114 (SYRYDWLFGP) lie on the Extracellular side of the membrane. Residues 115-140 (VMCKVFGSFLTLNMFASIFFITCMSV) traverse the membrane as a helical segment. Residues 141–159 (DRYQSVIYPFLSQRRNPWQ) are Cytoplasmic-facing. A helical membrane pass occupies residues 160-181 (ASYVVPLVWCMACLSSLPTFYF). Residues R182, Y204, and K215 each contribute to the angiotensin II site. Residues 182–206 (RDVRTIEYLGVNACIMAFPPEKYAQ) lie on the Extracellular side of the membrane. Residues 207 to 232 (WSAGIALMKNILGFIIPLIFIATCYF) form a helical membrane-spanning segment. Over 233-257 (GIRKHLLKTNSYGKNRITRDQVLKM) the chain is Cytoplasmic. A helical membrane pass occupies residues 258–281 (AAAVVLAFIICWLPFHVLTFLDAL). D279 provides a ligand contact to angiotensin II. Topologically, residues 282–294 (TWMGIINSCEVIA) are extracellular. A helical membrane pass occupies residues 295–320 (VIDLALPFAILLGFTNSCVNPFLYCF). D297 serves as a coordination point for angiotensin II. Residues 321–363 (VGNRFQQKLRSVFRVPITWLQGKRETMSCRKGSSLREMDTFVS) are Cytoplasmic-facing. Positions 324–333 (RFQQKLRSVF) are helix VIII. A Phosphoserine; by PKC modification is found at S354.

This sequence belongs to the G-protein coupled receptor 1 family. As to quaternary structure, interacts with MTUS1. Expressed at highest levels in adrenal gland and uterus.

The protein localises to the cell membrane. Its function is as follows. Receptor for angiotensin II, a vasoconstricting peptide. Signals primarily via a non-canonical G-protein- and beta-arrestin independent pathways. Cooperates with MTUS1 to inhibit ERK2 activation and cell proliferation. This is Type-2 angiotensin II receptor from Mus musculus (Mouse).